Consider the following 673-residue polypeptide: Putative potassium transport system protein Kup 1 (673 aa).

Transmembrane regions (helical) follow at residues 14–34 (GAGF…SPLY), 58–78 (LSLI…WIAL), 101–121 (WLII…ALTP), 147–167 (LPIV…QRFG), 175–195 (FGPV…INLF), 196–216 (GDFS…LLSP), 220–240 (AGIF…ALYS), 252–272 (VSWP…AAWL), 294–314 (LIIF…QALI), 345–365 (LYIP…VVYF), 374–394 (AYGL…TVYL), 403–423 (VFVV…FAAS), and 427–447 (FLHG…VMAI).

This sequence belongs to the HAK/KUP transporter (TC 2.A.72) family.

It is found in the cell membrane. The enzyme catalyses K(+)(in) + H(+)(in) = K(+)(out) + H(+)(out). Functionally, transport of potassium into the cell. Likely operates as a K(+):H(+) symporter. The polypeptide is Putative potassium transport system protein Kup 1 (Lactococcus lactis subsp. cremoris (strain MG1363)).